A 197-amino-acid polypeptide reads, in one-letter code: Adenylate kinase (197 aa).

12–17 contacts ATP; sequence GSGKTT. An NMP region spans residues 34 to 63; it reads STGDMLREEVASGSELGKTIESYIAKGALV. AMP is bound by residues Thr-35, Arg-40, 61–63, 88–91, and Gln-95; these read ALV and GYPR. The LID stretch occupies residues 130 to 144; the sequence is GRRAEAAPGEERSDD. Arg-131 is a binding site for ATP. AMP is bound by residues Arg-141 and Arg-152. Position 180 (Arg-180) interacts with ATP.

Belongs to the adenylate kinase family. As to quaternary structure, monomer.

Its subcellular location is the cytoplasm. The enzyme catalyses AMP + ATP = 2 ADP. It functions in the pathway purine metabolism; AMP biosynthesis via salvage pathway; AMP from ADP: step 1/1. In terms of biological role, catalyzes the reversible transfer of the terminal phosphate group between ATP and AMP. Plays an important role in cellular energy homeostasis and in adenine nucleotide metabolism. The polypeptide is Adenylate kinase (Sulfurovum sp. (strain NBC37-1)).